The sequence spans 563 residues: Cysteine--tRNA ligase, chloroplastic/mitochondrial (563 aa).

Cys91 is a binding site for Zn(2+). Gly92 is an L-cysteine binding site. The 'HIGH' region signature appears at 93–103 (VTAYDLSHIGH). Thr131 contributes to the L-cysteine binding site. Residues 136-139 (KIIA) carry the 'KIIK' region motif. Residues Cys271, His296, and Glu300 each coordinate Zn(2+). His296 lines the L-cysteine pocket. Residues 328 to 332 (KMSKS) carry the 'KMSKS' region motif. Lys331 lines the ATP pocket.

The protein belongs to the class-I aminoacyl-tRNA synthetase family. It depends on Zn(2+) as a cofactor.

It is found in the plastid. Its subcellular location is the chloroplast. The protein localises to the mitochondrion. It catalyses the reaction tRNA(Cys) + L-cysteine + ATP = L-cysteinyl-tRNA(Cys) + AMP + diphosphate. In terms of biological role, required for female gametophyte development. Is necessary for the fusion of central cell nuclei and programmed cell death (PCD) of the antipodals. In Arabidopsis thaliana (Mouse-ear cress), this protein is Cysteine--tRNA ligase, chloroplastic/mitochondrial.